A 492-amino-acid polypeptide reads, in one-letter code: Histone-lysine N-methyltransferase SUVR4 (492 aa).

The tract at residues 112 to 138 (ETRSASSGSSIQVVQKQPQLSNGDRKR) is disordered. Polar residues predominate over residues 113–133 (TRSASSGSSIQVVQKQPQLSN). Zn(2+) is bound by residues Cys196, Cys197, Cys200, Cys204, Cys213, Cys281, Cys285, Cys287, and Cys291. The 104-residue stretch at 196 to 299 (CCANCKGNCL…QCGNRVVQRG (104 aa)) folds into the Pre-SET domain. One can recognise an SET domain in the interval 302-435 (CQLQVYFTQE…AMDELTWDYM (134 aa)). Residues 313-315 (KGW) and 391-392 (NH) each bind S-adenosyl-L-methionine. Cys394 contributes to the Zn(2+) binding site. Tyr434 is a binding site for S-adenosyl-L-methionine. The region spanning 446–462 (KAFRCCCGSESCRDRKI) is the Post-SET domain. Cys450, Cys452, and Cys457 together coordinate Zn(2+). Residues 463–492 (KGSQGKSIERRKIVSAKKQQGSKEVSKKRK) are disordered.

The protein belongs to the class V-like SAM-binding methyltransferase superfamily. Histone-lysine methyltransferase family. In terms of assembly, interacts with ubiquitin.

The protein localises to the nucleus. It localises to the chromosome. It catalyses the reaction N(6)-methyl-L-lysyl(9)-[histone H3] + S-adenosyl-L-methionine = N(6),N(6)-dimethyl-L-lysyl(9)-[histone H3] + S-adenosyl-L-homocysteine + H(+). The enzyme catalyses N(6),N(6)-dimethyl-L-lysyl(9)-[histone H3] + S-adenosyl-L-methionine = N(6),N(6),N(6)-trimethyl-L-lysyl(9)-[histone H3] + S-adenosyl-L-homocysteine + H(+). Its function is as follows. Histone methyltransferase that converts monomethylated 'Lys-9' of histone H3 (H3K9me1) to dimethylated 'Lys-9' (H3K9me2) in the absence of bound ubiquitin, and to trimethylated 'Lys-9' (H3K9me3) in the presence of bound ubiquitin. Acts in a locus-specific manner and contributes to the transcriptional silencing of pseudogenes and transposons. H3 'Lys-9' methylation represents a specific tag for epigenetic transcriptional repression. In Arabidopsis thaliana (Mouse-ear cress), this protein is Histone-lysine N-methyltransferase SUVR4 (SUVR4).